The primary structure comprises 85 residues: Small ribosomal subunit protein uS17 (85 aa).

The protein belongs to the universal ribosomal protein uS17 family. Part of the 30S ribosomal subunit.

Functionally, one of the primary rRNA binding proteins, it binds specifically to the 5'-end of 16S ribosomal RNA. This chain is Small ribosomal subunit protein uS17, found in Lachnoclostridium phytofermentans (strain ATCC 700394 / DSM 18823 / ISDg) (Clostridium phytofermentans).